Reading from the N-terminus, the 181-residue chain is Keratin-associated protein 4-5 (181 aa).

26 tandem repeats follow at residues 5–9 (CCGSV), 20–24 (CCRPS), 25–29 (CCQTT), 30–34 (CCRTT), 35–39 (CCRPS), 40–44 (CCKPQ), 45–49 (CCQSV), 55–59 (CCHPS), 60–64 (CCISS), 65–69 (CCRPY), 70–74 (CCESS), 75–79 (CCRPC), 80–84 (CCQTT), 85–89 (CCRTT), 90–94 (CCRTT), 95–99 (CCCPS), 100–104 (CCVSS), 105–109 (CCRPQ), 110–114 (CCQSV), 115–119 (CCQPT), 120–124 (CCRPS), 125–129 (CCISS), 130–134 (CCHPS), 135–139 (CCESS), 140–144 (CCRPC), and 145–149 (CCVRP). Residues 5–154 (CCGSVSSEQS…CCVRPVCGRV (150 aa)) form a 26 X 5 AA repeats of C-C-[GRQVCHIEK]-[SPTR]-[VSTQYC] region.

It belongs to the KRTAP type 4 family. As to quaternary structure, interacts with hair keratins. In terms of tissue distribution, expressed in the hair follicles.

In terms of biological role, in the hair cortex, hair keratin intermediate filaments are embedded in an interfilamentous matrix, consisting of hair keratin-associated proteins (KRTAP), which are essential for the formation of a rigid and resistant hair shaft through their extensive disulfide bond cross-linking with abundant cysteine residues of hair keratins. The matrix proteins include the high-sulfur and high-glycine-tyrosine keratins. The polypeptide is Keratin-associated protein 4-5 (KRTAP4-5) (Homo sapiens (Human)).